A 287-amino-acid polypeptide reads, in one-letter code: MIELTKPRIVTMILVTTVASALIAGSATLTLIDWFWLMIGTALIAGSAGAANQVWECRIDRNMPRTANRPVPGGRMSYAVAVALTASSGIAGSIILWLGNGLVPACVGIATWLIYVLVYTPMKTRTAWNTTVGAIAGALPVFIGYTAAGGTLTELPGWMLFGVLACWQYPHFMAIAWLYRTQYAEAGFCMTTTVEPTGRHAAWQSILGSVALATCGVVLAWFPDGQWVASAASVLATVLILAASWPLLRASLNFRANPNDKTARKMLRWSLVVLPAVLLVMTLRASL.

8 consecutive transmembrane segments (helical) span residues 9 to 29 (IVTMILVTTVASALIAGSATL), 31 to 51 (LIDWFWLMIGTALIAGSAGAA), 94 to 114 (IILWLGNGLVPACVGIATWLI), 132 to 152 (VGAIAGALPVFIGYTAAGGTL), 158 to 178 (WMLFGVLACWQYPHFMAIAWL), 202 to 222 (AWQSILGSVALATCGVVLAWF), 228 to 248 (VASAASVLATVLILAASWPLL), and 267 to 287 (LRWSLVVLPAVLLVMTLRASL).

It belongs to the UbiA prenyltransferase family. Protoheme IX farnesyltransferase subfamily.

The protein resides in the cell inner membrane. The catalysed reaction is heme b + (2E,6E)-farnesyl diphosphate + H2O = Fe(II)-heme o + diphosphate. The protein operates within porphyrin-containing compound metabolism; heme O biosynthesis; heme O from protoheme: step 1/1. Its function is as follows. Converts heme B (protoheme IX) to heme O by substitution of the vinyl group on carbon 2 of heme B porphyrin ring with a hydroxyethyl farnesyl side group. This chain is Protoheme IX farnesyltransferase, found in Rhodopirellula baltica (strain DSM 10527 / NCIMB 13988 / SH1).